The sequence spans 168 residues: Photosystem I assembly protein Ycf3 (168 aa).

TPR repeat units lie at residues 35-68, 72-105, and 120-153; these read AFAY…EMDP, SYIL…NPFL, and GEQA…TPGN.

This sequence belongs to the Ycf3 family.

It is found in the plastid membrane. Its function is as follows. Essential for the assembly of the photosystem I (PSI) complex. May act as a chaperone-like factor to guide the assembly of the PSI subunits. The sequence is that of Photosystem I assembly protein Ycf3 from Cuscuta gronovii (Common dodder).